Reading from the N-terminus, the 1357-residue chain is DNA-directed RNA polymerase subunit beta (1357 aa).

This sequence belongs to the RNA polymerase beta chain family. The RNAP catalytic core consists of 2 alpha, 1 beta, 1 beta' and 1 omega subunit. When a sigma factor is associated with the core the holoenzyme is formed, which can initiate transcription.

It catalyses the reaction RNA(n) + a ribonucleoside 5'-triphosphate = RNA(n+1) + diphosphate. In terms of biological role, DNA-dependent RNA polymerase catalyzes the transcription of DNA into RNA using the four ribonucleoside triphosphates as substrates. The protein is DNA-directed RNA polymerase subunit beta of Pseudomonas paraeruginosa (strain DSM 24068 / PA7) (Pseudomonas aeruginosa (strain PA7)).